A 179-amino-acid polypeptide reads, in one-letter code: Oryzines biosynthesis cluster protein J (179 aa).

Positions 88-148 constitute a Cupin type-2 domain; that stretch reads YVDYHPGCEP…NHCWRNPSKT (61 aa).

This sequence belongs to the oryJ family.

The protein operates within secondary metabolite biosynthesis. Part of the gene cluster that mediates the biosynthesis of oryzines, natural products with an unusual maleidride backbone. The two subunits of the fungal fatty acid synthase oryfasA and oryfasB probably form octenoic acid. This fatty acid is most likely activated by the acyl-CoA ligase oryP to give octenyl-CoA before the citrate synthase-like protein oryE catalyzes condensation with oxaloacetate to form tricarboxylic acid. The next steps of the pathways are conjectural, but a favorite possible route has been proposed, beginning with decarboxylation and concomitant dehydration by the decarboxylase oryM, followed by tautomerization, which may lead to the production of a diene intermediate. Reduction of this diene intermediate could give the known metabolite piliformic acid. On the pathway to oryzine B and oryzine A, however, hydroxylation of the diene by the alpha-ketoglutarate-dependent dioxygenase oryG and lactonisation by the lactonohydrolases oryH or oryL could give oryzine B directly. Finally, enoyl reduction by the dehydrogenase oryD would then convert oryzine B into oryzine A. The chain is Oryzines biosynthesis cluster protein J from Aspergillus oryzae (strain ATCC 42149 / RIB 40) (Yellow koji mold).